The primary structure comprises 189 residues: GTP cyclohydrolase 1 (189 aa).

Cys-79, His-82, and Cys-151 together coordinate Zn(2+).

It belongs to the GTP cyclohydrolase I family. Toroid-shaped homodecamer, composed of two pentamers of five dimers.

It carries out the reaction GTP + H2O = 7,8-dihydroneopterin 3'-triphosphate + formate + H(+). It participates in cofactor biosynthesis; 7,8-dihydroneopterin triphosphate biosynthesis; 7,8-dihydroneopterin triphosphate from GTP: step 1/1. This is GTP cyclohydrolase 1 from Lactiplantibacillus plantarum (strain ATCC BAA-793 / NCIMB 8826 / WCFS1) (Lactobacillus plantarum).